Consider the following 414-residue polypeptide: Testis-specific Y-encoded-like protein 4 (414 aa).

Disordered regions lie at residues M1–K129 and P391–G414. Residues A24 to T40 show a composition bias toward basic and acidic residues. The segment covering E101–S112 has biased composition (low complexity).

Belongs to the nucleosome assembly protein (NAP) family.

The chain is Testis-specific Y-encoded-like protein 4 (TSPYL4) from Homo sapiens (Human).